A 397-amino-acid polypeptide reads, in one-letter code: Riboflavin biosynthesis protein RibBA (397 aa).

Positions 1–199 (MFHRIEEALE…IEDLIAYRRH (199 aa)) are DHBP synthase. Residues 26–27 (RE), Asp-31, 138–142 (RAGHT), and Glu-162 each bind D-ribulose 5-phosphate. Glu-27 serves as a coordination point for Mg(2+). His-141 lines the Mg(2+) pocket. Residues 200–397 (HETLVTREVE…VNKLGHLLNL (198 aa)) form a GTP cyclohydrolase II region. 250 to 254 (RVHSE) contacts GTP. The Zn(2+) site is built by Cys-255, Cys-266, and Cys-268. Residues Gln-271, 293 to 295 (EGR), and Thr-315 each bind GTP. The active-site Proton acceptor; for GTP cyclohydrolase activity is the Asp-327. Arg-329 (nucleophile; for GTP cyclohydrolase activity) is an active-site residue. The GTP site is built by Thr-350 and Lys-355.

It in the N-terminal section; belongs to the DHBP synthase family. The protein in the C-terminal section; belongs to the GTP cyclohydrolase II family. It depends on Mg(2+) as a cofactor. Mn(2+) serves as cofactor. Requires Zn(2+) as cofactor.

It catalyses the reaction D-ribulose 5-phosphate = (2S)-2-hydroxy-3-oxobutyl phosphate + formate + H(+). The catalysed reaction is GTP + 4 H2O = 2,5-diamino-6-hydroxy-4-(5-phosphoribosylamino)-pyrimidine + formate + 2 phosphate + 3 H(+). It functions in the pathway cofactor biosynthesis; riboflavin biosynthesis; 2-hydroxy-3-oxobutyl phosphate from D-ribulose 5-phosphate: step 1/1. The protein operates within cofactor biosynthesis; riboflavin biosynthesis; 5-amino-6-(D-ribitylamino)uracil from GTP: step 1/4. Its function is as follows. Catalyzes the conversion of D-ribulose 5-phosphate to formate and 3,4-dihydroxy-2-butanone 4-phosphate. In terms of biological role, catalyzes the conversion of GTP to 2,5-diamino-6-ribosylamino-4(3H)-pyrimidinone 5'-phosphate (DARP), formate and pyrophosphate. The sequence is that of Riboflavin biosynthesis protein RibBA from Bacillus cereus (strain ATCC 10987 / NRS 248).